A 166-amino-acid chain; its full sequence is HTH-type transcriptional regulator PecS (166 aa).

The region spanning 25–160 (PMLVIGTLSR…LRALLGRVEK (136 aa)) is the HTH marR-type domain.

Its subcellular location is the cytoplasm. The presence of PecM is required to ensure the full regulation of the pecS-pecM intergenic region by PecS. In terms of biological role, negatively regulates the expression of genes encoding pectinase and cellulase, which play a major role in virulence, and the expression of the blue pigment indigoidine, which is implicated in pathogenicity and protection from oxidative stress. Represses the expression of genes involved in indigoidine biosynthesis by binding to indA and indC promoter regions. Also binds to promoter sites in the pecS-pecM intergenic region and negatively autoregulates its expression as well as that of pecM. This Dickeya dadantii (strain 3937) (Erwinia chrysanthemi (strain 3937)) protein is HTH-type transcriptional regulator PecS.